Reading from the N-terminus, the 578-residue chain is Isocitrate dehydrogenase kinase/phosphatase (578 aa).

Residues 315–321 (APGIRGM) and Lys336 contribute to the ATP site. Residue Asp371 is part of the active site.

This sequence belongs to the AceK family.

The protein localises to the cytoplasm. The catalysed reaction is L-seryl-[isocitrate dehydrogenase] + ATP = O-phospho-L-seryl-[isocitrate dehydrogenase] + ADP + H(+). In terms of biological role, bifunctional enzyme which can phosphorylate or dephosphorylate isocitrate dehydrogenase (IDH) on a specific serine residue. This is a regulatory mechanism which enables bacteria to bypass the Krebs cycle via the glyoxylate shunt in response to the source of carbon. When bacteria are grown on glucose, IDH is fully active and unphosphorylated, but when grown on acetate or ethanol, the activity of IDH declines drastically concomitant with its phosphorylation. This chain is Isocitrate dehydrogenase kinase/phosphatase, found in Shigella boydii serotype 18 (strain CDC 3083-94 / BS512).